We begin with the raw amino-acid sequence, 249 residues long: Coproheme decarboxylase (249 aa).

Tyr145 is a catalytic residue. Residues 145–149 (YPMAR) and His172 contribute to the Fe-coproporphyrin III site.

It belongs to the ChdC family. Type 1 subfamily. The cofactor is Fe-coproporphyrin III.

It carries out the reaction Fe-coproporphyrin III + 2 H2O2 + 2 H(+) = heme b + 2 CO2 + 4 H2O. It catalyses the reaction Fe-coproporphyrin III + H2O2 + H(+) = harderoheme III + CO2 + 2 H2O. The enzyme catalyses harderoheme III + H2O2 + H(+) = heme b + CO2 + 2 H2O. The protein operates within porphyrin-containing compound metabolism; protoheme biosynthesis. Involved in coproporphyrin-dependent heme b biosynthesis. Catalyzes the decarboxylation of Fe-coproporphyrin III (coproheme) to heme b (protoheme IX), the last step of the pathway. The reaction occurs in a stepwise manner with a three-propionate intermediate. This Oceanobacillus iheyensis (strain DSM 14371 / CIP 107618 / JCM 11309 / KCTC 3954 / HTE831) protein is Coproheme decarboxylase.